Here is a 368-residue protein sequence, read N- to C-terminus: Mitogen-activated protein kinase 7 (368 aa).

Positions 32–319 (YVPIKPIGRG…VTDALLHPYM (288 aa)) constitute a Protein kinase domain. ATP contacts are provided by residues 38–46 (IGRGAYGVV) and Lys61. The active-site Proton acceptor is the Asp158. A Phosphothreonine modification is found at Thr191. The TXY motif lies at 191–193 (TEY). Residue Tyr193 is modified to Phosphotyrosine. Phosphothreonine is present on Thr196.

It belongs to the protein kinase superfamily. CMGC Ser/Thr protein kinase family. MAP kinase subfamily. As to quaternary structure, interacts with MKK3. It depends on Mg(2+) as a cofactor. In terms of processing, dually phosphorylated on Thr-191 and Tyr-193, which activates the enzyme.

It catalyses the reaction L-seryl-[protein] + ATP = O-phospho-L-seryl-[protein] + ADP + H(+). The catalysed reaction is L-threonyl-[protein] + ATP = O-phospho-L-threonyl-[protein] + ADP + H(+). Its activity is regulated as follows. Activated by threonine and tyrosine phosphorylation. Activated in response to hydrogen peroxide. Activation is triggered by MAPKKK17 and MAPKKK18 in a MKK3-dependent manner. Functionally, MKK3-MPK7 module acts as a positive regulator of PR1 gene expression. The chain is Mitogen-activated protein kinase 7 (MPK7) from Arabidopsis thaliana (Mouse-ear cress).